The chain runs to 285 residues: HTH-type transcriptional regulator MurR (285 aa).

Residues 1–77 enclose the HTH rpiR-type domain; it reads MLYLTKISNA…MALIGEYSAS (77 aa). The segment at residues 37 to 56 is a DNA-binding region (H-T-H motif); the sequence is SRQMAKQLGISQSSIVKFAQ. An SIS domain is found at 128-268; that stretch reads IIEVISKAPF…FVGLVQLNDV (141 aa).

As to quaternary structure, homotetramer.

It participates in amino-sugar metabolism; N-acetylmuramate degradation [regulation]. Functionally, represses the expression of the murPQ operon involved in the uptake and degradation of N-acetylmuramic acid (MurNAc). Binds to two adjacent inverted repeats within the operator region. MurNAc 6-phosphate, the substrate of MurQ, is the specific inducer that weakens binding of MurR to the operator. In Escherichia coli (strain K12 / MC4100 / BW2952), this protein is HTH-type transcriptional regulator MurR.